Consider the following 147-residue polypeptide: DNA-directed RNA polymerase subunit 6 homolog (147 aa).

The disordered stretch occupies residues 20-39; the sequence is ETEEENFVDSEEESEDKDEI.

It belongs to the archaeal RpoK/eukaryotic RPB6 RNA polymerase subunit family. Part of the viral DNA-directed RNA polymerase that consists of 8 polII-like subunits (RPB1, RPB2, RPB3, RPB5, RPB6, RPB7, RPB9, RPB10), a capping enzyme and a termination factor.

Its subcellular location is the host cytoplasm. The protein resides in the virion. Its function is as follows. Component of the DNA-directed RNA polymerase (RNAP) that catalyzes the transcription in the cytoplasm of viral DNA into RNA using the four ribonucleoside triphosphates as substrates. This chain is DNA-directed RNA polymerase subunit 6 homolog, found in Ornithodoros (relapsing fever ticks).